Here is a 546-residue protein sequence, read N- to C-terminus: Membrane protein insertase YidC (546 aa).

A helical transmembrane segment spans residues 8-28 (ILLATVLSVGILILWQVIFPT). Residues 31–70 (VPPKPAPPPAAEVAKPAAPASPAPGAAAPAVPAPPPDAPE) are disordered. Low complexity predominate over residues 41-60 (AEVAKPAAPASPAPGAAAPA). 5 helical membrane passes run 326-346 (IDYG…LYVM), 356-376 (WGVA…PLTY), 422-442 (LGGC…YAAL), 459-479 (LTAH…SFVM), and 498-518 (FFPG…TLYI).

Belongs to the OXA1/ALB3/YidC family. Type 1 subfamily. Interacts with the Sec translocase complex via SecD. Specifically interacts with transmembrane segments of nascent integral membrane proteins during membrane integration.

It is found in the cell inner membrane. Its function is as follows. Required for the insertion and/or proper folding and/or complex formation of integral membrane proteins into the membrane. Involved in integration of membrane proteins that insert both dependently and independently of the Sec translocase complex, as well as at least some lipoproteins. Aids folding of multispanning membrane proteins. The sequence is that of Membrane protein insertase YidC from Anaeromyxobacter sp. (strain K).